Consider the following 606-residue polypeptide: Pro-secreted protein ORF2 (606 aa).

The N-terminal stretch at 1-19 (MSLCRLLLMLAMCCGVSRG) is a signal peptide. The segment at 22–54 (TLPAGGRRGQRRRDNSAQWSTQQRPEGAVGPAP) is disordered. The Nuclear localization signal signature appears at 28 to 34 (RRGQRRR). Asparagine 255 is a glycosylation site (N-linked (GlcNAc...) asparagine; by host). Positions 313-339 (ILGVLFNLADTVLGGLPSTLLRAASGQ) are particle formation. N-linked (GlcNAc...) asparagine; by host glycosylation occurs at asparagine 510.

This sequence belongs to the hepevirus capsid protein family. In terms of assembly, homodimer. Self-assembles to form the capsid. The capsid is dominated by dimers that define the 30 morphological units. Interacts with phosphorylated protein ORF3. Post-translationally, N-glycosylated.

It is found in the secreted. Its subcellular location is the virion. The protein resides in the host cytoplasm. It localises to the host endoplasmic reticulum. The protein localises to the host Golgi apparatus. It is found in the host cell surface. Its subcellular location is the host nucleus. In terms of biological role, plays a role in the inhibition of host antibody-mediated neutralization without blocking viral cell entry. Functionally, forms an icosahedral capsid with a T=1 symmetry and a 34 nm diameter. The capsid is composed of 60 copies linked to each other. Binds to the 5' end of the genomic RNA to mediate genome encapsidation. The polypeptide is Pro-secreted protein ORF2 (Gallus gallus (Chicken)).